A 355-amino-acid polypeptide reads, in one-letter code: 3-dehydroquinate synthase (355 aa).

Residues 71–76, 105–109, 129–130, lysine 142, and lysine 151 each bind NAD(+); these read EGEERK, GVVGD, and TS. Residues glutamate 184, histidine 246, and histidine 263 each coordinate Zn(2+).

The protein belongs to the sugar phosphate cyclases superfamily. Dehydroquinate synthase family. Co(2+) serves as cofactor. It depends on Zn(2+) as a cofactor. The cofactor is NAD(+).

It is found in the cytoplasm. The catalysed reaction is 7-phospho-2-dehydro-3-deoxy-D-arabino-heptonate = 3-dehydroquinate + phosphate. The protein operates within metabolic intermediate biosynthesis; chorismate biosynthesis; chorismate from D-erythrose 4-phosphate and phosphoenolpyruvate: step 2/7. Its function is as follows. Catalyzes the conversion of 3-deoxy-D-arabino-heptulosonate 7-phosphate (DAHP) to dehydroquinate (DHQ). This Streptococcus pneumoniae (strain JJA) protein is 3-dehydroquinate synthase.